The primary structure comprises 1294 residues: Ethylene-insensitive protein 2 (1294 aa).

The Cytoplasmic segment spans residues 1–12 (MEAEIVNVRPQL). Residues 13-33 (GFIQRMVPALLPVLLVSVGYI) form a helical membrane-spanning segment. Residues 34–50 (DPGKWVANIEGGARFGY) lie on the Extracellular side of the membrane. The helical transmembrane segment at 51–71 (DLVAITLLFNFAAILCQYVAA) threads the bilayer. The Cytoplasmic portion of the chain corresponds to 72–105 (RISVVTGKHLAQICNEEYDKWTCMFLGIQAEFSA). The chain crosses the membrane as a helical span at residues 106-126 (ILLDLTMVVGVAHALNLLFGV). Position 127 (E127) is a topological domain, extracellular. A helical transmembrane segment spans residues 128–148 (LSTGVFLAAMDAFLFPVFASF). Over 149-155 (LENGMAN) the chain is Cytoplasmic. The helical transmembrane segment at 156-176 (TVSIYSAGLVLLLYVSGVLLS) threads the bilayer. Topologically, residues 177–194 (QSEIPLSMNGVLTRLNGE) are extracellular. The helical transmembrane segment at 195–215 (SAFALMGLLGASIVPHNFYIH) threads the bilayer. At 216–237 (SYFAGESTSSSDVDKSSLCQDH) the chain is on the cytoplasmic side. Residues 238–258 (LFAIFGVFSGLSLVNYVLMNA) traverse the membrane as a helical segment. The Extracellular portion of the chain corresponds to 259 to 287 (AANVFHSTGLVVLTFHDALSLMEQVFMSP). Residues 288–308 (LIPVVFLMLLFFSSQITALAW) form a helical membrane-spanning segment. The Cytoplasmic portion of the chain corresponds to 309-334 (AFGGEVVLHDFLKIEIPAWLHRATIR). A run of 2 helical transmembrane segments spans residues 335–355 (ILAV…GIYQ) and 356–376 (LLIF…IPLF). Topologically, residues 377 to 397 (RIASSRQIMGVHKIPQVGEFL) are cytoplasmic. A helical transmembrane segment spans residues 398-418 (ALTTFLGFLGLNVVFVVEMVF). At 419-440 (GSSDWAGGLRWNTVMGTSIQYT) the chain is on the extracellular side. The helical transmembrane segment at 441–461 (TLLVSSCASLCLILWLAATPL) threads the bilayer. The Cytoplasmic segment spans residues 462-1294 (KSASNRAEAQ…KNVTAYGSLG (833 aa)). Disordered stretches follow at residues 534–561 (TDQE…SSLK) and 623–662 (ETEE…SLSR). A compositionally biased stretch (basic and acidic residues) spans 536–550 (QEIRSSPPEERELDV). Phosphoserine is present on residues S645, S659, and S757. Residue T819 is modified to Phosphothreonine. S924 is subject to Phosphoserine. The Nuclear localization signal motif lies at 1262-1269 (LKRYKRRL). A disordered region spans residues 1269-1294 (LSNKPVGMNQDGPGSRKNVTAYGSLG). The residue at position 1283 (S1283) is a Phosphoserine.

The protein belongs to the NRAMP (TC 2.A.55) family. As to quaternary structure, interacts (via NLS) with ETR1. Interacts (via C-terminus) with EER5 and the COP9 signalosome subunits CSN3, CSN6A and CSN6B. Interacts with ETP1 and ETP2. Interacts with CTR1. Interacts with all members of the ethylene receptor family, including ETR1, ETR2, ERS1, ERS2 and EIN4. Binds to MRF3/ECIP1. Interacts with several P-body components, such as XRN4/EIN5, PAB2, PAB4 and PAB8. Binds to ENAP1 in the presence of ethylene; this reaction facilitates its association with histone. Post-translationally, phosphorylated by CTR1 on at least 4 sites. Phosphorylation of Ser-645 and Ser-924 is involved in repressing EIN2 signaling. Loss of phosphorylation results in nuclear localization of the C-terminus of EIN2. Localized to the guard cells after methyl jasmonate treatment.

The protein localises to the endoplasmic reticulum membrane. It localises to the nucleus. Its subcellular location is the cytoplasm. In terms of biological role, central factor in signaling pathways regulated by ethylene (ET) and involved in various processes including development, plant defense, senescence, nucleotide sugar flux, and tropisms. Necessary for ethylene-mediated gene regulation, and for the induction of some genes by ozone. Acts downstream of ET receptors, and upstream of ethylene regulated transcription factors. Required for cytokinin-mediated processes. Seems to be implicated in cross-talk between ET, jasmonate and other pathways. Probably not involved in iron uptake. Has a short half-life and undergoes rapid proteasome-mediated turnover in the absence of ethylene. Required for ethylene-induced EIN3 stabilization via proteasomal degradation of EBF1/EBF2 proteins. Regulates the leaf senescence induced by methyl jasmonate, ethylene and abscisic acid. Required during salt stress to confer resistance. Its function is as follows. Trafficking signal inducing ethylene response. The nuclear localization is both necessary and sufficient to activate EIN3-mediated transcription and ethylene responses. Involved in ethylene (ET)-mediated signaling pathways by triggering histone acetylation of H3K14 and H3K23 in an ENAP1-dependent manner, thus influencing the expression of ethylene-responsive genes. Necessary and sufficient for 3'-UTR-mediated translational repression of EBF1 and EBF2 mRNAs. Ethylene induces EIN2-CEND to associate with 3' UTRs in cytoplasmic foci and target EBF1/2 mRNAs to cytoplasmic processing-body (P-body). MPK6 regulates the cleavage and nuclear translocation of EIN2-CEND under methyl jasmonate treatment. Required for EIN3 accumulation. This chain is Ethylene-insensitive protein 2, found in Arabidopsis thaliana (Mouse-ear cress).